The primary structure comprises 388 residues: Chalcone synthase LF3 (388 aa).

Cysteine 164 is a catalytic residue.

This sequence belongs to the thiolase-like superfamily. Chalcone/stilbene synthases family.

The enzyme catalyses (E)-4-coumaroyl-CoA + 3 malonyl-CoA + 3 H(+) = 2',4,4',6'-tetrahydroxychalcone + 3 CO2 + 4 CoA. It functions in the pathway secondary metabolite biosynthesis; flavonoid biosynthesis. Its function is as follows. The primary product of this enzyme is 4,2',4',6'-tetrahydroxychalcone (also termed naringenin-chalcone or chalcone) which can under specific conditions spontaneously isomerize into naringenin. The polypeptide is Chalcone synthase LF3 (CHS-LF3) (Ipomoea batatas (Sweet potato)).